We begin with the raw amino-acid sequence, 212 residues long: Probable chemoreceptor glutamine deamidase CheD (212 aa).

This sequence belongs to the CheD family.

It catalyses the reaction L-glutaminyl-[protein] + H2O = L-glutamyl-[protein] + NH4(+). Its function is as follows. Probably deamidates glutamine residues to glutamate on methyl-accepting chemotaxis receptors (MCPs), playing an important role in chemotaxis. The protein is Probable chemoreceptor glutamine deamidase CheD of Oleidesulfovibrio alaskensis (strain ATCC BAA-1058 / DSM 17464 / G20) (Desulfovibrio alaskensis).